Consider the following 132-residue polypeptide: Phosphoribosyl-ATP pyrophosphatase (132 aa).

Belongs to the PRA-PH family.

The protein resides in the cytoplasm. It catalyses the reaction 1-(5-phospho-beta-D-ribosyl)-ATP + H2O = 1-(5-phospho-beta-D-ribosyl)-5'-AMP + diphosphate + H(+). It functions in the pathway amino-acid biosynthesis; L-histidine biosynthesis; L-histidine from 5-phospho-alpha-D-ribose 1-diphosphate: step 2/9. The polypeptide is Phosphoribosyl-ATP pyrophosphatase (Acidovorax sp. (strain JS42)).